A 330-amino-acid chain; its full sequence is Phosphate acyltransferase (330 aa).

This sequence belongs to the PlsX family. As to quaternary structure, homodimer. Probably interacts with PlsY.

It is found in the cytoplasm. The enzyme catalyses a fatty acyl-[ACP] + phosphate = an acyl phosphate + holo-[ACP]. It participates in lipid metabolism; phospholipid metabolism. In terms of biological role, catalyzes the reversible formation of acyl-phosphate (acyl-PO(4)) from acyl-[acyl-carrier-protein] (acyl-ACP). This enzyme utilizes acyl-ACP as fatty acyl donor, but not acyl-CoA. This is Phosphate acyltransferase from Streptococcus pneumoniae (strain JJA).